Consider the following 405-residue polypeptide: Acetate kinase (405 aa).

Asparagine 7 provides a ligand contact to Mg(2+). Residue lysine 14 coordinates ATP. Arginine 92 provides a ligand contact to substrate. Residue aspartate 149 is the Proton donor/acceptor of the active site. ATP contacts are provided by residues 209–213 (HLGNG) and 284–286 (DMR). Residue glutamate 389 coordinates Mg(2+).

The protein belongs to the acetokinase family. In terms of assembly, homodimer. Mg(2+) is required as a cofactor. Requires Mn(2+) as cofactor.

The protein localises to the cytoplasm. The enzyme catalyses acetate + ATP = acetyl phosphate + ADP. It participates in metabolic intermediate biosynthesis; acetyl-CoA biosynthesis; acetyl-CoA from acetate: step 1/2. Its function is as follows. Catalyzes the formation of acetyl phosphate from acetate and ATP. Can also catalyze the reverse reaction. This is Acetate kinase from Borrelia garinii subsp. bavariensis (strain ATCC BAA-2496 / DSM 23469 / PBi) (Borreliella bavariensis).